The sequence spans 151 residues: Large ribosomal subunit protein uL15 (151 aa).

A disordered region spans residues 1–57 (MTLRLDSLKSNKGARRRKLRKGRGIAAGQGASCGFGMRGQKSRSGRPTRPGFEGGQM). The segment covering 12–23 (KGARRRKLRKGR) has biased composition (basic residues). Positions 25 to 37 (IAAGQGASCGFGM) are enriched in gly residues.

It belongs to the universal ribosomal protein uL15 family. In terms of assembly, part of the 50S ribosomal subunit.

Functionally, binds to the 23S rRNA. This chain is Large ribosomal subunit protein uL15, found in Synechococcus sp. (strain CC9605).